Here is a 348-residue protein sequence, read N- to C-terminus: Ileal sodium/bile acid cotransporter (348 aa).

Residues 1-28 (MDNSSVCPPNATVCEGDSCVVPESNFNA) are Extracellular-facing. 2 N-linked (GlcNAc...) asparagine glycosylation sites follow: Asn-3 and Asn-10. A helical membrane pass occupies residues 29–49 (ILNTVMSTVLTILLAMVMFSM). The Cytoplasmic portion of the chain corresponds to 50-87 (GCNVEVHKFLGHIKRPWGIFVGFLCQFGIMPLTGFILS). The helical transmembrane segment at 88-108 (VASGILPVQAVVVLIMGCCPG) threads the bilayer. Over 109-126 (GTGSNILAYWIDGDMDLS) the chain is Extracellular. Residues 127 to 147 (VSMTTCSTLLALGMMPLCLFV) traverse the membrane as a helical segment. The Cytoplasmic segment spans residues 148–157 (YTKMWVDSGT). Residues 158-178 (IVIPYDSIGISLVALVIPVSF) traverse the membrane as a helical segment. Topologically, residues 179 to 195 (GMFVNHKWPQKAKIILK) are extracellular. A helical membrane pass occupies residues 196-216 (IGSITGVILIVLIAVIGGILY). At 217 to 224 (QSAWIIEP) the chain is on the cytoplasmic side. Residues 225-245 (KLWIIGTIFPIAGYSLGFFLA) traverse the membrane as a helical segment. Over 246–284 (RLAGQPWYRCRTVALETGMQNTQLCSTIVQLSFSPEDLN) the chain is Extracellular. The chain crosses the membrane as a helical span at residues 285–305 (LVFTFPLIYTVFQLVFAAVIL). Residues 306–348 (GIYVTYRKCYGKNDAEFLEKTDNEMDSRPSFDETNKGFQPDEK) lie on the Cytoplasmic side of the membrane. A disordered region spans residues 328–348 (NEMDSRPSFDETNKGFQPDEK). Position 335 is a phosphoserine (Ser-335).

This sequence belongs to the bile acid:sodium symporter (BASS) (TC 2.A.28) family. In terms of assembly, monomer and homodimer. In terms of tissue distribution, expressed in ileum.

It localises to the membrane. The enzyme catalyses taurocholate(out) + 2 Na(+)(out) = taurocholate(in) + 2 Na(+)(in). The catalysed reaction is cholate(out) + 2 Na(+)(out) = cholate(in) + 2 Na(+)(in). It carries out the reaction taurochenodeoxycholate(out) + 2 Na(+)(out) = taurochenodeoxycholate(in) + 2 Na(+)(in). It catalyses the reaction tauroursodeoxycholate(out) + 2 Na(+)(out) = tauroursodeoxycholate(in) + 2 Na(+)(in). The enzyme catalyses glycocholate(out) + 2 Na(+)(out) = glycocholate(in) + 2 Na(+)(in). The catalysed reaction is tauronorcholate(out) + 2 Na(+)(out) = tauronorcholate(in) + 2 Na(+)(in). It carries out the reaction tauroallocholate(out) + 2 Na(+)(out) = tauroallocholate(in) + 2 Na(+)(in). It catalyses the reaction taurodeoxycholate(out) + 2 Na(+)(out) = taurodeoxycholate(in) + 2 Na(+)(in). The enzyme catalyses tauro-beta-muricholate(out) + 2 Na(+)(out) = tauro-beta-muricholate(in) + 2 Na(+)(in). In terms of biological role, plays a critical role in the sodium-dependent reabsorption of bile acids from the lumen of the small intestine. Transports various bile acids, unconjugated or conjugated, such as cholate and taurocholate. Also responsible for bile acid transport in the renal proximal tubules, a salvage mechanism that helps conserve bile acids. Works collaboratively with the Na(+)-taurocholate cotransporting polypeptide (NTCP), the organic solute transporter (OST), and the bile salt export pump (BSEP), to ensure efficacious biological recycling of bile acids during enterohepatic circulation. The sequence is that of Ileal sodium/bile acid cotransporter (Slc10a2) from Mus musculus (Mouse).